The chain runs to 513 residues: Sphingolipid C9-methyltransferase 1 (513 aa).

A run of 2 helical transmembrane segments spans residues 63–83 (FLVAALLGIPQWLSWKLGGGL) and 85–105 (TAIFLSIFTTIPVLAVIWTVM). S-adenosyl-L-methionine-binding positions include 228 to 229 (YT), 265 to 273 (LLDIGCGWG), 291 to 296 (TLARNQ), and 321 to 322 (YR).

The protein belongs to the CFA/CMAS family.

Its subcellular location is the membrane. The catalysed reaction is a (4E,8E)-4-sphinga-4,8-dienine ceramide + S-adenosyl-L-methionine = a 9-methyl-(4E,8E)-sphinga-4,8-dienine ceramide + S-adenosyl-L-homocysteine + H(+). Its pathway is lipid metabolism; sphingolipid metabolism. Functionally, catalyzes methylation of the sphingoid base component of glucosylceramides (GluCers) at the C9-position. Sphingolipid C9-methylation requires 4,8-desaturated ceramides as substrates. Glucosylceramides play important roles in the growth, differentiation and pathogenicity. The methyl group at the C9-position distinguishes fungal glucosylceramides from those of plants and animals, and may thus play a role in host-pathogen interactions enabling the host to recognize the fungal attack and initiate specific defense responses. However, C-9 methylation of GlcCers is not essential for the sensitivity of F.graminearum to plant defensins MsDef1 and RsAFP2. The chain is Sphingolipid C9-methyltransferase 1 from Gibberella zeae (strain ATCC MYA-4620 / CBS 123657 / FGSC 9075 / NRRL 31084 / PH-1) (Wheat head blight fungus).